A 270-amino-acid polypeptide reads, in one-letter code: Putative phosphoenolpyruvate synthase regulatory protein (270 aa).

150 to 157 (GVSRCGKT) lines the ADP pocket.

The protein belongs to the pyruvate, phosphate/water dikinase regulatory protein family. PSRP subfamily.

The catalysed reaction is [pyruvate, water dikinase] + ADP = [pyruvate, water dikinase]-phosphate + AMP + H(+). The enzyme catalyses [pyruvate, water dikinase]-phosphate + phosphate + H(+) = [pyruvate, water dikinase] + diphosphate. In terms of biological role, bifunctional serine/threonine kinase and phosphorylase involved in the regulation of the phosphoenolpyruvate synthase (PEPS) by catalyzing its phosphorylation/dephosphorylation. This Shewanella baltica (strain OS223) protein is Putative phosphoenolpyruvate synthase regulatory protein.